The chain runs to 254 residues: Thiazole synthase (254 aa).

K96 functions as the Schiff-base intermediate with DXP in the catalytic mechanism. Residues G157, 183-184, and 205-206 contribute to the 1-deoxy-D-xylulose 5-phosphate site; these read AG and NT.

This sequence belongs to the ThiG family. In terms of assembly, homotetramer. Forms heterodimers with either ThiH or ThiS.

The protein localises to the cytoplasm. It carries out the reaction [ThiS sulfur-carrier protein]-C-terminal-Gly-aminoethanethioate + 2-iminoacetate + 1-deoxy-D-xylulose 5-phosphate = [ThiS sulfur-carrier protein]-C-terminal Gly-Gly + 2-[(2R,5Z)-2-carboxy-4-methylthiazol-5(2H)-ylidene]ethyl phosphate + 2 H2O + H(+). It functions in the pathway cofactor biosynthesis; thiamine diphosphate biosynthesis. Its function is as follows. Catalyzes the rearrangement of 1-deoxy-D-xylulose 5-phosphate (DXP) to produce the thiazole phosphate moiety of thiamine. Sulfur is provided by the thiocarboxylate moiety of the carrier protein ThiS. In vitro, sulfur can be provided by H(2)S. This is Thiazole synthase from Bacillus velezensis (strain DSM 23117 / BGSC 10A6 / LMG 26770 / FZB42) (Bacillus amyloliquefaciens subsp. plantarum).